We begin with the raw amino-acid sequence, 672 residues long: Nuclear RNA export factor 1 (672 aa).

Disordered regions lie at residues 1-52 (MPKR…SFKP) and 73-101 (DEDD…IPRG). The segment covering 40 to 49 (RKDRNKRRVS) has biased composition (basic residues). An RRM domain is found at 113–193 (WYQVTLQNAQ…PRVRSGIPLV (81 aa)). 4 LRR repeats span residues 255-280 (DLEA…KRLP), 281-304 (NLKI…LRNL), 305-332 (SILE…EVRR), and 333-360 (KFPK…GRLL). One can recognise an NTF2 domain in the interval 375–529 (VVRQFLDQYF…FCIRNETIFI (155 aa)). Residues 541 to 564 (KRSQHQPAPGAMPSTSSAVTSPQA) form a disordered region. Over residues 553–563 (PSTSSAVTSPQ) the composition is skewed to polar residues. Phosphoserine is present on serine 561. The TAP-C domain occupies 618 to 672 (STKMQMIEAMSAQSQMNVIWSRKCLEETNWDFNHAAFVFEKLFKENKIPPEAFMK).

It belongs to the NXF family. Interacts with Nxt1. Interacts with ZC3H3. Forms a complex with Nup358/RanBP2, RanGAP and Nxt1. Interacts with Nup54 and Nup58. Interacts with Orc3 and Hpr1. As to expression, expressed ubiquitously.

The protein localises to the nucleus. The protein resides in the nucleoplasm. It is found in the cytoplasm. Its subcellular location is the nucleus envelope. Functionally, mediates the export of the majority of mRNAs from the nucleus to the cytoplasm. In ovarian follicle cells, plays a role in transposable element silencing regulation by enabling the nuclear export of flamenco (flam) transcripts and subsequent piRNA biogenesis. In Drosophila melanogaster (Fruit fly), this protein is Nuclear RNA export factor 1.